The primary structure comprises 777 residues: MFKRTGSLLLRCRASRVPVIGRPLISLSTSSTSLSLSRPRSFATTSLRRYTEASSSTTQTSPSSSSWPAPDAAPRVPQTLTEKIVQAYSLGLAEGQYVKAGDYVMLSPHRCMTHDNSWPTALKFMAIGASKVHNPDQIVMTLDHDVQNKSEKNLKKYESIEKFAKQHGIDFYPAGHGVGHQIMIEEGYAFPGTVTVASDSHSNMYGGVGCLGTPMVRTDAATIWATGRTWWKVPPIAKVQFTGTLPEGVTGKDVIVALSGLFNKDEVLNYAIEFTGSEETMKSLSVDTRLTIANMTTEWGALTGLFPIDSTLEQWLRHKAATASRTETARRFAEERINELFANPTVADRGARYAKYLYLDLSTLSPYVSGPNSVKVATPLDELEKHKLKIDKAYLVSCTNSRASDIAAAAKVFKDAVARTGGPVRVADGVEFYVAAASKAEQKIAEEAGDWQALMDAGAIPLPAGCAVCIGLGAGLLKEGEVGISASNRNFKGRMGSPDAKAYLASPEVVAASALNGVISGPGIYKRPEDWTGVSIGEGEVVESGSRIDTTLEAMEKFIGQLDSMIDSSSKAVMPEESTGSGATEVDIVPGFPEKIEGEILFLDADNISTDGIYPGKYTYQDDVTKDKMAQVCMENYDPAFSGIARAGDIFVSGFNFGCGSSREQAATSILAKQLPLVVAGSIGNTFSRNAVNNALPLLEMPRLIERLREAFGSEKQPTRRTGWTFTWNVRTSQVTVQEGPGGETWSQSVPAFPPNLQDIIAQGGLEKWVKKEISKA.

A mitochondrion-targeting transit peptide spans 1–35; the sequence is MFKRTGSLLLRCRASRVPVIGRPLISLSTSSTSLS. The disordered stretch occupies residues 47-74; it reads LRRYTEASSSTTQTSPSSSSWPAPDAAP. Positions 52 to 74 are enriched in low complexity; it reads EASSSTTQTSPSSSSWPAPDAAP. Cys-398, Cys-466, and Cys-469 together coordinate [4Fe-4S] cluster.

It belongs to the aconitase/IPM isomerase family. [4Fe-4S] cluster is required as a cofactor.

It localises to the mitochondrion. It catalyses the reaction (2R,3S)-homoisocitrate = cis-homoaconitate + H2O. The protein operates within amino-acid biosynthesis; L-lysine biosynthesis via AAA pathway; L-alpha-aminoadipate from 2-oxoglutarate: step 3/5. Its function is as follows. Catalyzes the reversible hydration of cis-homoaconitate to (2R,3S)-homoisocitrate, a step in the alpha-aminoadipate pathway for lysine biosynthesis. The chain is Homoaconitase, mitochondrial (lys4) from Aspergillus fumigatus (strain ATCC MYA-4609 / CBS 101355 / FGSC A1100 / Af293) (Neosartorya fumigata).